The following is a 633-amino-acid chain: Basic helix-loop-helix ARNT-like protein 1 (633 aa).

Residues 1-65 (MADQRMDISS…GMDTDKDDQH (65 aa)) are disordered. Position 17 is a phosphoserine; by GSK3-beta (serine 17). Positions 24 to 33 (ISSSLSTSGM) are enriched in polar residues. The Nuclear localization signal signature appears at 36-41 (NRKRKG). One can recognise a bHLH domain in the interval 79-132 (NAREAHSQIEKRRRDKMNSFIDELASLVPTCNAMSRKLDKLTVLRMAVQHMKTL). Residue serine 85 is modified to Phosphoserine. Serine 97 carries the phosphoserine; by CK2 modification. Positions 149-159 (LSDDELKHLIL) match the Nuclear export signal 1 motif. The PAS 1 domain maps to 150–222 (SDDELKHLIL…EQLSSSDTAP (73 aa)). Lysine 259 is covalently cross-linked (Glycyl lysine isopeptide (Lys-Gly) (interchain with G-Cter in SUMO2 and SUMO3)). A Glycyl lysine isopeptide (Lys-Gly) (interchain with G-Cter in SUMO) cross-link involves residue lysine 266. The region spanning 333-403 (PQPVNGEIRV…ECHRQVLQTR (71 aa)) is the PAS 2 domain. Positions 368 to 376 (LAYLPQELL) match the Nuclear export signal 2 motif. Positions 408–451 (TNCYKFKIKDGSFITLRSRWFSFMNPWTKEVEYIVSTNTVVSTN) constitute a PAC domain. Disordered regions lie at residues 472 to 499 (SVLQ…RAGA) and 518 to 555 (GSSP…TPDI). A compositionally biased stretch (low complexity) spans 518–528 (GSSPSSCGSSP). N6-acetyllysine is present on lysine 545.

In terms of assembly, component of the circadian clock oscillator which includes the CRY1/2 proteins, CLOCK or NPAS2, BMAL1 or BMAL2, CSNK1D and/or CSNK1E, TIMELESS and the PER1/2/3 proteins. Forms a heterodimer with CLOCK. The CLOCK-BMAL1 heterodimer is required for E-box-dependent transactivation, for CLOCK nuclear translocation and degradation, and, for phosphorylation of both CLOCK and BMAL1. Interacts with PER1, PER2, CRY1 and CRY2 and this interaction requires a translocation to the nucleus. Interaction of the CLOCK-BMAL1 heterodimer with PER or CRY inhibits transcription activation. Ubiquitinated, leading to its proteasomal degradation. Deubiquitinated by USP9X. In terms of processing, O-glycosylated; contains O-GlcNAc. O-glycosylation by OGT prevents protein degradation by inhibiting ubiquitination. It also stabilizes the CLOCK-BMAL1 heterodimer thereby increasing CLOCK-BMAL1-mediated transcription of genes in the negative loop of the circadian clock such as PER1/2/3 and CRY1/2. Post-translationally, acetylated on Lys-545 by CLOCK during the repression phase of the circadian cycle. Acetylation facilitates recruitment of CRY1 protein and initiates the repression phase of the circadian cycle. Acetylated at Lys-545 by KAT5 during the activation phase of the cycle, leading to recruitment of the positive transcription elongation factor b (P-TEFb) and BRD4, followed by productive elongation of circadian transcripts. Deacetylated by SIRT1, which may result in decreased protein stability. Phosphorylated upon dimerization with CLOCK. Phosphorylation enhances the transcriptional activity, alters the subcellular localization and decreases the stability of the CLOCK-BMAL1 heterodimer by promoting its degradation. Phosphorylation shows circadian variations in the liver with a peak between CT10 to CT14. Phosphorylation at Ser-97 by CK2 is essential for its nuclear localization, its interaction with CLOCK and controls CLOCK nuclear entry. Dephosphorylation at Ser-85 is important for dimerization with CLOCK and transcriptional activity. In terms of processing, sumoylated on Lys-266 upon dimerization with CLOCK. Predominantly conjugated to poly-SUMO2/3 rather than SUMO1 and the level of these conjugates undergo rhythmic variation, peaking at CT9-CT12. Sumoylation localizes it exclusively to the PML body and promotes its ubiquitination in the PML body, ubiquitin-dependent proteasomal degradation and the transcriptional activity of the CLOCK-BMAL1 heterodimer. Post-translationally, undergoes lysosome-mediated degradation in a time-dependent manner in the liver.

It localises to the nucleus. Its subcellular location is the cytoplasm. The protein localises to the PML body. Functionally, transcriptional activator which forms a core component of the circadian clock. The circadian clock, an internal time-keeping system, regulates various physiological processes through the generation of approximately 24 hour circadian rhythms in gene expression, which are translated into rhythms in metabolism and behavior. It is derived from the Latin roots 'circa' (about) and 'diem' (day) and acts as an important regulator of a wide array of physiological functions including metabolism, sleep, body temperature, blood pressure, endocrine, immune, cardiovascular, and renal function. Consists of two major components: the central clock, residing in the suprachiasmatic nucleus (SCN) of the brain, and the peripheral clocks that are present in nearly every tissue and organ system. Both the central and peripheral clocks can be reset by environmental cues, also known as Zeitgebers (German for 'timegivers'). The predominant Zeitgeber for the central clock is light, which is sensed by retina and signals directly to the SCN. The central clock entrains the peripheral clocks through neuronal and hormonal signals, body temperature and feeding-related cues, aligning all clocks with the external light/dark cycle. Circadian rhythms allow an organism to achieve temporal homeostasis with its environment at the molecular level by regulating gene expression to create a peak of protein expression once every 24 hours to control when a particular physiological process is most active with respect to the solar day. Transcription and translation of core clock components (CLOCK, NPAS2, BMAL1, BMAL2, PER1, PER2, PER3, CRY1 and CRY2) plays a critical role in rhythm generation, whereas delays imposed by post-translational modifications (PTMs) are important for determining the period (tau) of the rhythms (tau refers to the period of a rhythm and is the length, in time, of one complete cycle). A diurnal rhythm is synchronized with the day/night cycle, while the ultradian and infradian rhythms have a period shorter and longer than 24 hours, respectively. Disruptions in the circadian rhythms contribute to the pathology of cardiovascular diseases, cancer, metabolic syndromes and aging. A transcription/translation feedback loop (TTFL) forms the core of the molecular circadian clock mechanism. Transcription factors, CLOCK or NPAS2 and BMAL1 or BMAL2, form the positive limb of the feedback loop, act in the form of a heterodimer and activate the transcription of core clock genes and clock-controlled genes (involved in key metabolic processes), harboring E-box elements (5'-CACGTG-3') within their promoters. The core clock genes: PER1/2/3 and CRY1/2 which are transcriptional repressors form the negative limb of the feedback loop and interact with the CLOCK|NPAS2-BMAL1|BMAL2 heterodimer inhibiting its activity and thereby negatively regulating their own expression. This heterodimer also activates nuclear receptors NR1D1/2 and RORA/B/G, which form a second feedback loop and which activate and repress BMAL1 transcription, respectively. The preferred binding motif for the CLOCK-BMAL1 heterodimer is 5'-CACGTGA-3', which contains a flanking adenine nucleotide at the 3-prime end of the canonical 6-nucleotide E-box sequence. CLOCK specifically binds to the half-site 5'-CAC-3', while BMAL1 binds to the half-site 5'-GTGA-3'. Essential for the rhythmic interaction of CLOCK with ASS1 and plays a critical role in positively regulating CLOCK-mediated acetylation of ASS1. Plays a role in protecting against lethal sepsis by limiting the expression of immune checkpoint protein CD274 in macrophages in a PKM2-dependent manner. The polypeptide is Basic helix-loop-helix ARNT-like protein 1 (BMAL1) (Tyto alba (Barn owl)).